Here is a 491-residue protein sequence, read N- to C-terminus: Cytochrome P450 2F5 (491 aa).

Residue Cys436 participates in heme binding.

The protein belongs to the cytochrome P450 family. Heme serves as cofactor.

The protein resides in the endoplasmic reticulum membrane. It localises to the microsome membrane. The enzyme catalyses an organic molecule + reduced [NADPH--hemoprotein reductase] + O2 = an alcohol + oxidized [NADPH--hemoprotein reductase] + H2O + H(+). Its function is as follows. Cytochromes P450 are a group of heme-thiolate monooxygenases. In liver microsomes, this enzyme is involved in an NADPH-dependent electron transport pathway. It oxidizes a variety of structurally unrelated compounds, including steroids, fatty acids, and xenobiotics. This chain is Cytochrome P450 2F5 (CYP2F5), found in Gorilla gorilla gorilla (Western lowland gorilla).